A 159-amino-acid chain; its full sequence is Transcription elongation factor A protein-like 1 (159 aa).

Residues 1–120 (MEKACKEPEE…PQFRGDIHGR (120 aa)) form a disordered region. Residues 17 to 34 (KADEERPSVEPSPEKSSP) are compositionally biased toward basic and acidic residues. Positions 37–54 (QSSEEVSSEEEFFPDELL) are enriched in acidic residues. Composition is skewed to basic and acidic residues over residues 64–80 (SEER…DLFE) and 95–119 (HKLE…DIHG).

Belongs to the TFS-II family. TFA subfamily.

The protein localises to the nucleus. Its function is as follows. May be involved in transcriptional regulation. Modulates various viral and cellular promoters in a promoter context-dependent manner. Does not bind DNA directly. The polypeptide is Transcription elongation factor A protein-like 1 (Bos taurus (Bovine)).